Here is a 244-residue protein sequence, read N- to C-terminus: MGRGPSIEARKNASDSKRGKIFTKIIRQIGVAARAGGGDPSNNPSLRVVIDKALASNMSKDVIERAIKKAIGEMEGVQYEEVRYEGYAPGGVAVIVDCLTDNRLRTVSDVRHAFSKCGGNMGTEGSVAFMFKRLGVLSYAHAIADEERITEAAIDAGAEDVMVYIEDDEIEVITTPEAFSRVKEEMAALGLMPYHAEITFRADSDIVVDGDTAIQVRKLLDILEDLDDVQDVYSNVDQVTLGKR.

It belongs to the TACO1 family.

The protein localises to the cytoplasm. This is Probable transcriptional regulatory protein XfasM23_0940 from Xylella fastidiosa (strain M23).